Reading from the N-terminus, the 262-residue chain is Thiazole synthase (262 aa).

Catalysis depends on K104, which acts as the Schiff-base intermediate with DXP. 1-deoxy-D-xylulose 5-phosphate contacts are provided by residues G165, 191 to 192 (AG), and 213 to 214 (NT).

It belongs to the ThiG family. Homotetramer. Forms heterodimers with either ThiH or ThiS.

Its subcellular location is the cytoplasm. It catalyses the reaction [ThiS sulfur-carrier protein]-C-terminal-Gly-aminoethanethioate + 2-iminoacetate + 1-deoxy-D-xylulose 5-phosphate = [ThiS sulfur-carrier protein]-C-terminal Gly-Gly + 2-[(2R,5Z)-2-carboxy-4-methylthiazol-5(2H)-ylidene]ethyl phosphate + 2 H2O + H(+). It participates in cofactor biosynthesis; thiamine diphosphate biosynthesis. Functionally, catalyzes the rearrangement of 1-deoxy-D-xylulose 5-phosphate (DXP) to produce the thiazole phosphate moiety of thiamine. Sulfur is provided by the thiocarboxylate moiety of the carrier protein ThiS. In vitro, sulfur can be provided by H(2)S. The sequence is that of Thiazole synthase from Nitrosococcus oceani (strain ATCC 19707 / BCRC 17464 / JCM 30415 / NCIMB 11848 / C-107).